The following is a 478-amino-acid chain: Putrescine oxidase (478 aa).

R15–I70 contributes to the FAD binding site.

This sequence belongs to the flavin monoamine oxidase family. It depends on FAD as a cofactor.

The catalysed reaction is putrescine + O2 + H2O = 4-aminobutanal + H2O2 + NH4(+). This Kocuria rosea (Deinococcus erythromyxa) protein is Putrescine oxidase (puo).